The chain runs to 505 residues: AMP phosphorylase (505 aa).

Residues Gly-170, 196–201, and Thr-205 each bind AMP; that span reads SRAITS. Asp-258 functions as the Proton donor in the catalytic mechanism. AMP is bound by residues Ser-266 and Lys-290.

It belongs to the thymidine/pyrimidine-nucleoside phosphorylase family. Type 2 subfamily.

It catalyses the reaction AMP + phosphate = alpha-D-ribose 1,5-bisphosphate + adenine. It carries out the reaction CMP + phosphate = cytosine + alpha-D-ribose 1,5-bisphosphate. The enzyme catalyses UMP + phosphate = alpha-D-ribose 1,5-bisphosphate + uracil. Functionally, catalyzes the conversion of AMP and phosphate to adenine and ribose 1,5-bisphosphate (R15P). Exhibits phosphorylase activity toward CMP and UMP in addition to AMP. Functions in an archaeal AMP degradation pathway, together with R15P isomerase and RubisCO. The polypeptide is AMP phosphorylase (Methanococcus maripaludis (strain C6 / ATCC BAA-1332)).